The primary structure comprises 599 residues: Aspartate--tRNA(Asp/Asn) ligase (599 aa).

Residue Glu173 participates in L-aspartate binding. Positions 197-200 are aspartate; that stretch reads QLFK. Arg219 serves as a coordination point for L-aspartate. Residues 219 to 221 and Gln228 each bind ATP; that span reads RDE. An L-aspartate-binding site is contributed by His449. Glu482 contacts ATP. Arg489 is a binding site for L-aspartate. An ATP-binding site is contributed by 534–537; the sequence is GLDR.

Belongs to the class-II aminoacyl-tRNA synthetase family. Type 1 subfamily. As to quaternary structure, homodimer.

It is found in the cytoplasm. The enzyme catalyses tRNA(Asx) + L-aspartate + ATP = L-aspartyl-tRNA(Asx) + AMP + diphosphate. In terms of biological role, aspartyl-tRNA synthetase with relaxed tRNA specificity since it is able to aspartylate not only its cognate tRNA(Asp) but also tRNA(Asn). Reaction proceeds in two steps: L-aspartate is first activated by ATP to form Asp-AMP and then transferred to the acceptor end of tRNA(Asp/Asn). This Marinobacter nauticus (strain ATCC 700491 / DSM 11845 / VT8) (Marinobacter aquaeolei) protein is Aspartate--tRNA(Asp/Asn) ligase.